The sequence spans 113 residues: Coat protein TP1 (113 aa).

Its subcellular location is the virion. The chain is Coat protein TP1 from Thermoproteus tenax virus 1 (strain KRA1) (TTV1).